Here is a 641-residue protein sequence, read N- to C-terminus: Threonine--tRNA ligase (641 aa).

The 61-residue stretch at 1 to 61 (MPVITLPDGS…ENDTELAIVT (61 aa)) folds into the TGS domain. The tract at residues 242 to 533 (DHRKIGKKLG…LIEEYEGAFP (292 aa)) is catalytic. 3 residues coordinate Zn(2+): Cys-333, His-384, and His-510.

It belongs to the class-II aminoacyl-tRNA synthetase family. As to quaternary structure, homodimer. Zn(2+) is required as a cofactor.

The protein resides in the cytoplasm. The catalysed reaction is tRNA(Thr) + L-threonine + ATP = L-threonyl-tRNA(Thr) + AMP + diphosphate + H(+). Functionally, catalyzes the attachment of threonine to tRNA(Thr) in a two-step reaction: L-threonine is first activated by ATP to form Thr-AMP and then transferred to the acceptor end of tRNA(Thr). Also edits incorrectly charged L-seryl-tRNA(Thr). In Marinobacter nauticus (strain ATCC 700491 / DSM 11845 / VT8) (Marinobacter aquaeolei), this protein is Threonine--tRNA ligase.